Consider the following 838-residue polypeptide: V-type proton ATPase 116 kDa subunit a 1 (838 aa).

The Cytoplasmic segment spans residues 1–388 (MGELFRSEEM…DAYGIGTYRE (388 aa)). Residues 389-407 (INPAPYTIITFPFLFAVMF) traverse the membrane as a helical segment. The Vacuolar segment spans residues 408-409 (GD). The helical transmembrane segment at 410–426 (FGHGILMTLIAIWMVLR) threads the bilayer. Topologically, residues 427 to 441 (ESRILSQKSDNEMFS) are cytoplasmic. A helical transmembrane segment spans residues 442–471 (TVFSGRYIILLMGLFSTYTGLIYNDCFSKS). Topologically, residues 472-535 (LNMFGSSWSV…ANNKLAFLNS (64 aa)) are vacuolar. A helical transmembrane segment spans residues 536-555 (FKMKMSVILGIIHMLFGVML). The Cytoplasmic portion of the chain corresponds to 556 to 573 (SLLNHIYFKKPLNIYLGF). The helical transmembrane segment at 574-594 (IPEMIFMSSLFGYLVILIFYK) threads the bilayer. Residues 595 to 639 (WTAYDAHTSKEAPSPLIHFINMFLFSYGDTSNKMLYRGQKGIQCF) lie on the Vacuolar side of the membrane. Residues 640–659 (LVVVALLCVPWMLVAKPLVL) form a helical membrane-spanning segment. Topologically, residues 660–725 (RHQYLRRKHL…DTVVYQAIHT (66 aa)) are cytoplasmic. Residues 726–750 (IEYCLGCISNTASYLRLWALSLAHA) traverse the membrane as a helical segment. Residues 751–771 (QLSEVLWTMVIHTGLSVRSLA) are Vacuolar-facing. The chain crosses the membrane as a helical span at residues 772–810 (GGFGLVFIFAAFATLTVAILLVMEGLSAFLHALRLHWIE). Topologically, residues 811–838 (FQNKFYTGTGFKFLPFSFDPIREGKFDD) are cytoplasmic.

It belongs to the V-ATPase 116 kDa subunit family. V-ATPase is a heteromultimeric enzyme made up of two complexes: the ATP-hydrolytic V1 complex and the proton translocation V0 complex. The V1 complex consists of three catalytic AB heterodimers that form a heterohexamer, three peripheral stalks each consisting of EG heterodimers, one central rotor including subunits D and F, and the regulatory subunits C and H. The proton translocation complex V0 consists of the proton transport subunit a, a ring of proteolipid subunits c9c'', rotary subunit d, subunits e and f, and two accessory subunits. Detected in brain (at protein level). Highest expression in brain, intermediate levels in kidney, and relatively low levels in bone and liver.

It is found in the cytoplasmic vesicle. Its subcellular location is the clathrin-coated vesicle membrane. The protein resides in the secretory vesicle. It localises to the synaptic vesicle membrane. The protein localises to the melanosome. Its function is as follows. Subunit of the V0 complex of vacuolar(H+)-ATPase (V-ATPase), a multisubunit enzyme composed of a peripheral complex (V1) that hydrolyzes ATP and a membrane integral complex (V0) that translocates protons. V-ATPase is responsible for acidifying and maintaining the pH of intracellular compartments and in some cell types, is targeted to the plasma membrane, where it is responsible for acidifying the extracellular environment. Required for assembly and activity of the vacuolar ATPase. The chain is V-type proton ATPase 116 kDa subunit a 1 (ATP6V0A1) from Gallus gallus (Chicken).